A 360-amino-acid polypeptide reads, in one-letter code: Protein Wnt-2 (360 aa).

Positions 1–37 are cleaved as a signal peptide; that stretch reads MIPRRSCWLILLLNLLNVQSLLDASWWSTVAQLSTAL. Disulfide bonds link Cys80–Cys91, Cys130–Cys138, Cys140–Cys158, Cys213–Cys227, Cys215–Cys222, Cys289–Cys320, Cys305–Cys315, Cys319–Cys359, Cys335–Cys350, Cys337–Cys347, and Cys342–Cys343. The N-linked (GlcNAc...) asparagine glycan is linked to Asn90. Ser219 carries the O-palmitoleoyl serine; by mom-1 lipid modification. A glycan (N-linked (GlcNAc...) asparagine) is linked at Asn352.

This sequence belongs to the Wnt family. Palmitoleoylation is required for efficient binding to frizzled receptors. Depalmitoleoylation leads to Wnt signaling pathway inhibition. As to expression, expressed in intestine, pharynx, anterior body wall muscle, vulva, some pharyngeal neurons and SMD head neurons. Expressed along the boundary between the intestine and muscle or hypodermis, but is also expressed in the hypodermis in cells including seam cells.

The protein resides in the secreted. It is found in the extracellular space. It localises to the extracellular matrix. Ligand for members of the frizzled family of seven transmembrane receptors. Probable developmental protein. May be a signaling molecule which affects the development of discrete regions of tissues. Is likely to signal over only few cell diameters. Involved in the correct positioning of the developing nerve ring and in axon guidance of SIA and SIB neurons, probably by binding to tyrosine kinase receptor cam-1. In addition, regulates the positioning of some head neuronal cells, muscle arms associated with the nerve ring and the excretory pore. Together with Wnt ligand cwn-1, regulates the migration of CAN, ALM, BDU and HSN neurons during embryogenesis, the migration of QL and QR neuroblast descendants during larval development, and polarity of ALM neurons. May act through the wnt receptor cfz-2 to regulate QR neuroblast descendant migration, and to direct ALM migration. Also plays a role in axon growth and guidance in HSN and male CP neurons. In addition, together with wnt ligand cwn-1, negatively regulates developmental neurite pruning of AIM neurons probably by acting as a ligand for receptor tyrosine kinase cam-1. Through the cam-1 receptor also probably regulates the outgrowth of neurites from RME GABAergic motor neurons. May act redundantly with other Wnt ligands such as cwn-1 and mom-2 to control seam cell polarity. This Caenorhabditis elegans protein is Protein Wnt-2.